We begin with the raw amino-acid sequence, 378 residues long: uncharacterized protein (378 aa).

Polar residues predominate over residues 1–11 (MSQQTTPAEQK). Positions 1–33 (MSQQTTPAEQKSLQRKKPPFRADQVGSLLRSEP) are disordered.

This sequence to B.subtilis YxjH.

This is an uncharacterized protein from Bacillus subtilis (strain 168).